The chain runs to 386 residues: Probable mannan endo-1,4-beta-mannosidase A (386 aa).

The signal sequence occupies residues 1–21 (MKLNPSLLTAAGLVSAQLASA). Residues Trp95 and Asn207 each contribute to the substrate site. Glu208 (proton donor) is an active-site residue. Residue Tyr283 participates in substrate binding. The active-site Nucleophile is Glu316. N-linked (GlcNAc...) asparagine glycosylation is present at Asn336. Residue Trp346 participates in substrate binding.

This sequence belongs to the glycosyl hydrolase 5 (cellulase A) family.

It localises to the secreted. It catalyses the reaction Random hydrolysis of (1-&gt;4)-beta-D-mannosidic linkages in mannans, galactomannans and glucomannans.. Endo-1,4-mannanase, a crucial enzyme for depolymerization of seed galactomannans and wood galactoglucomannans. In Aspergillus oryzae (strain ATCC 42149 / RIB 40) (Yellow koji mold), this protein is Probable mannan endo-1,4-beta-mannosidase A (manA).